A 316-amino-acid chain; its full sequence is MLP-like protein 34 (316 aa).

The protein belongs to the MLP family.

The sequence is that of MLP-like protein 34 (MLP34) from Arabidopsis thaliana (Mouse-ear cress).